We begin with the raw amino-acid sequence, 121 residues long: Prefoldin subunit beta (121 aa).

This sequence belongs to the prefoldin subunit beta family. Heterohexamer of two alpha and four beta subunits.

The protein localises to the cytoplasm. Molecular chaperone capable of stabilizing a range of proteins. Seems to fulfill an ATP-independent, HSP70-like function in archaeal de novo protein folding. In Methanoculleus marisnigri (strain ATCC 35101 / DSM 1498 / JR1), this protein is Prefoldin subunit beta.